The following is a 302-amino-acid chain: 1D-myo-inositol 2-acetamido-2-deoxy-alpha-D-glucopyranoside deacetylase (302 aa).

3 residues coordinate Zn(2+): His-12, Asp-15, and His-147.

This sequence belongs to the MshB deacetylase family. Zn(2+) is required as a cofactor.

It catalyses the reaction 1D-myo-inositol 2-acetamido-2-deoxy-alpha-D-glucopyranoside + H2O = 1D-myo-inositol 2-amino-2-deoxy-alpha-D-glucopyranoside + acetate. Catalyzes the deacetylation of 1D-myo-inositol 2-acetamido-2-deoxy-alpha-D-glucopyranoside (GlcNAc-Ins) in the mycothiol biosynthesis pathway. The polypeptide is 1D-myo-inositol 2-acetamido-2-deoxy-alpha-D-glucopyranoside deacetylase (Thermobispora bispora (strain ATCC 19993 / DSM 43833 / CBS 139.67 / JCM 10125 / KCTC 9307 / NBRC 14880 / R51)).